Reading from the N-terminus, the 336-residue chain is Tetraacyldisaccharide 4'-kinase (336 aa).

60 to 67 (TVGGTGKT) contacts ATP.

Belongs to the LpxK family.

The catalysed reaction is a lipid A disaccharide + ATP = a lipid IVA + ADP + H(+). It participates in glycolipid biosynthesis; lipid IV(A) biosynthesis; lipid IV(A) from (3R)-3-hydroxytetradecanoyl-[acyl-carrier-protein] and UDP-N-acetyl-alpha-D-glucosamine: step 6/6. Its function is as follows. Transfers the gamma-phosphate of ATP to the 4'-position of a tetraacyldisaccharide 1-phosphate intermediate (termed DS-1-P) to form tetraacyldisaccharide 1,4'-bis-phosphate (lipid IVA). The protein is Tetraacyldisaccharide 4'-kinase of Pseudomonas fluorescens (strain ATCC BAA-477 / NRRL B-23932 / Pf-5).